The primary structure comprises 118 residues: Large ribosomal subunit protein bL20 (118 aa).

This sequence belongs to the bacterial ribosomal protein bL20 family.

Functionally, binds directly to 23S ribosomal RNA and is necessary for the in vitro assembly process of the 50S ribosomal subunit. It is not involved in the protein synthesizing functions of that subunit. The protein is Large ribosomal subunit protein bL20 of Phenylobacterium zucineum (strain HLK1).